Consider the following 314-residue polypeptide: tRNA dimethylallyltransferase (314 aa).

12 to 19 (GPTGTGKS) contributes to the ATP binding site. A substrate-binding site is contributed by 14–19 (TGTGKS).

The protein belongs to the IPP transferase family. As to quaternary structure, monomer. Requires Mg(2+) as cofactor.

It catalyses the reaction adenosine(37) in tRNA + dimethylallyl diphosphate = N(6)-dimethylallyladenosine(37) in tRNA + diphosphate. In terms of biological role, catalyzes the transfer of a dimethylallyl group onto the adenine at position 37 in tRNAs that read codons beginning with uridine, leading to the formation of N6-(dimethylallyl)adenosine (i(6)A). The chain is tRNA dimethylallyltransferase from Mycolicibacterium paratuberculosis (strain ATCC BAA-968 / K-10) (Mycobacterium paratuberculosis).